The primary structure comprises 139 residues: Peptide methionine sulfoxide reductase MsrB (139 aa).

Positions 8–130 constitute a MsrB domain; sequence DQEWRQQLTD…NSASLRFHSA (123 aa). Zn(2+)-binding residues include cysteine 47, cysteine 50, cysteine 96, and cysteine 99. The Nucleophile role is filled by cysteine 119.

It belongs to the MsrB Met sulfoxide reductase family. Zn(2+) is required as a cofactor.

It carries out the reaction L-methionyl-[protein] + [thioredoxin]-disulfide + H2O = L-methionyl-(R)-S-oxide-[protein] + [thioredoxin]-dithiol. This Hahella chejuensis (strain KCTC 2396) protein is Peptide methionine sulfoxide reductase MsrB.